Reading from the N-terminus, the 1393-residue chain is DNA glycosylase/AP lyase ROS1 (1393 aa).

3 disordered regions span residues 1–25 (MEKQ…MKPF), 98–186 (SLSS…TSTR), and 237–265 (LSAP…SNLE). Low complexity predominate over residues 98–108 (SLSSVSNNVAE). Over residues 117-126 (PKRKKHRPKV) the composition is skewed to basic residues. Basic and acidic residues-rich tracts occupy residues 127-138 (RREAKPKREPKP) and 162-171 (KKVEVSKDQD). Residues 243-256 (PKRKRSQGKRKGVQ) are compositionally biased toward basic residues. A DEMETER region spans residues 528-626 (KVDLDDETDR…AFMSLASQFP (99 aa)). A compositionally biased stretch (polar residues) spans 653-672 (EETMSSPPDHNHSSVTLKNT). Disordered regions lie at residues 653–722 (EETM…SVEV) and 789–830 (SNQV…CSQQ). The span at 687–698 (SRSSSEIAISAH) shows a compositional bias: low complexity. Residues 699–722 (ESVDKTTDSKEYVDSDRKGSSVEV) show a composition bias toward basic and acidic residues. Polar residues predominate over residues 816-830 (KSSVDSSEPGCCSQQ). K901 is covalently cross-linked (Glycyl lysine isopeptide (Lys-Gly) (interchain with G-Cter in ubiquitin)). [4Fe-4S] cluster contacts are provided by C1038, C1045, C1048, and C1054.

It belongs to the DNA glycosylase family. DEMETER subfamily. Interacts (via the central region) with ZDP. Binds to RPA2A. Interacts with XRCC1. Interacts probably with a complex made of MBD7, IDM1, IDM2 and IDM3. Interacts with APE1L. [4Fe-4S] cluster serves as cofactor. Expressed ubiquitously in both vegetative and reproductive organs.

It localises to the nucleus. The protein resides in the nucleolus. It catalyses the reaction 2'-deoxyribonucleotide-(2'-deoxyribose 5'-phosphate)-2'-deoxyribonucleotide-DNA = a 3'-end 2'-deoxyribonucleotide-(2,3-dehydro-2,3-deoxyribose 5'-phosphate)-DNA + a 5'-end 5'-phospho-2'-deoxyribonucleoside-DNA + H(+). Stimulated by ZDP. Stimulated by XRCC1. In terms of biological role, bifunctional DNA glycosylase/lyase, which excises 5-methylcytosine (5-meC) and 5-hydroxymethylcytosine (5-hmeC), leaving an apyrimidinic (AP) site that is subsequently incised by the lyase activity. Generates 3'-phosphor-alpha,beta-unsaturated aldehyde (3'-PUA) as a primary 5-meC excision intermediate. Prevents DNA hypermethylation, specifically in the promoter of otherwise silenced loci. May be involved in DNA repair through its nicking activity on methylated DNA. Binds with similar affinity to both methylated and non-methylated DNA. Highly distributive behavior on DNA substrates containing multiple 5-meC residues. Involved with Pol IV in the remodeling of the 5S rDNA chromatin via DNA methylation modifications during the first days of development post-germination. Participates in UV-B induced- and oxidative DNA damage repair. In Arabidopsis thaliana (Mouse-ear cress), this protein is DNA glycosylase/AP lyase ROS1.